A 429-amino-acid chain; its full sequence is MTAPLKAIDGSADLPQLMNDLAKRARAAARVLALAPAEQKNRALEAMERRIRARADVIIAANAEDVAEAKAVGVTPSFVDRLTLTPARVAAMADGIAVVRGVADPVGVVTESWQRPNGMTIERVRVPLGVIGVIFESRPNVAADAGVLCLKSGNAVILRGGSDSFRSCRAIHECLVEGLREAGLPDTAITLVPTRDRAAVGLLLSGLNGGVDVIVPRGGKSLVARVEAEARVPVFAHLEGVNHVYVDGAADLDMAKSIVLNAKMRRTGVCGAAETLLIDRASQDKIKPLVDMLIGAGCEVRGDEAVRAADARVTPANNEDWDTEYLDAIIAAKVVDGVDGAIAHIHAHGSHHTDAIVTQDNKVADKFLNEVDSAIVLHNASTQFADGGEFGFGAEIGIATGKFHARGPVGVEQLTSFKYRIHGTGQTRP.

Belongs to the gamma-glutamyl phosphate reductase family.

The protein resides in the cytoplasm. The catalysed reaction is L-glutamate 5-semialdehyde + phosphate + NADP(+) = L-glutamyl 5-phosphate + NADPH + H(+). It participates in amino-acid biosynthesis; L-proline biosynthesis; L-glutamate 5-semialdehyde from L-glutamate: step 2/2. Functionally, catalyzes the NADPH-dependent reduction of L-glutamate 5-phosphate into L-glutamate 5-semialdehyde and phosphate. The product spontaneously undergoes cyclization to form 1-pyrroline-5-carboxylate. The protein is Gamma-glutamyl phosphate reductase of Bradyrhizobium sp. (strain ORS 278).